Consider the following 465-residue polypeptide: MSIYRISTTRKMPEVQKLNALLASYVRFISADSSLRDVLAAKIPAEQERVKNFRKQHGSFKMGETTVDMMYGGMRGIKALVTETSVLDADEGIRFRGLSIPECQKVLPAADGGEEPLPEGLFWLLLTGEVPSKAQVKQVSREWAARAALPQHVVTMLNNFPTSLHPMSQFSAAITALNHDSKFAKAYSDGVHKSKYWEHVYEDSMDLIAKLPVVAATIYCNTYRNGKGSKSIDSSLDWSANFVKMLGYDDPKFTELMRLYLTIHSDHEGGNVSAHTVHLVGSALSDPYLSFAAGMNGLAGPLHGLANQEVLVWLRKLQKEAGSNPSEEQLKEYIWKTLKSGQVVPGYGHAVLRKTDPRYTCQREFALKHLPNDELFQLVSKIYKVVPPILQETGKVKNPWPNVDAHSGVLLQYYGMKEMNYYTVLFGVSRALGVLASLVWDRALGLPIERPKSLSTDLLMKMVQK.

Catalysis depends on residues H303, H349, and D404.

Belongs to the citrate synthase family. Homodimer.

It localises to the mitochondrion matrix. It catalyses the reaction oxaloacetate + acetyl-CoA + H2O = citrate + CoA + H(+). It functions in the pathway carbohydrate metabolism; tricarboxylic acid cycle; isocitrate from oxaloacetate: step 1/2. In Glossina morsitans morsitans (Savannah tsetse fly), this protein is Probable citrate synthase, mitochondrial.